A 359-amino-acid chain; its full sequence is Protein Wnt-5a (359 aa).

A signal peptide spans 1-20 (MATTHLTAALALLCALLQVD). A disulfide bond links C83 and C94. N-linked (GlcNAc...) asparagine glycans are attached at residues N93 and N99. Disulfide bonds link C133-C141, C143-C161, C217-C231, C219-C226, C288-C319, C304-C314, C318-C358, C334-C349, C336-C346, and C341-C342. S223 carries O-palmitoleoyl serine; by PORCN lipidation. 2 N-linked (GlcNAc...) asparagine glycosylation sites follow: N291 and N305.

The protein belongs to the Wnt family. Palmitoleoylation is required for efficient binding to frizzled receptors. Depalmitoleoylation leads to Wnt signaling pathway inhibition. As to expression, neuroectodermal and non-neuroectodermal tissues.

The protein localises to the secreted. It localises to the extracellular space. The protein resides in the extracellular matrix. In terms of biological role, ligand for members of the frizzled family of seven transmembrane receptors. Can activate or inhibit canonical Wnt signaling, depending on receptor context. Required during embryogenesis for extension of the primary anterior-posterior axis. The polypeptide is Protein Wnt-5a (WNT-5A) (Ambystoma mexicanum (Axolotl)).